Here is a 137-residue protein sequence, read N- to C-terminus: Putative pre-16S rRNA nuclease (137 aa).

This sequence belongs to the YqgF nuclease family.

It is found in the cytoplasm. Functionally, could be a nuclease involved in processing of the 5'-end of pre-16S rRNA. This Clostridium perfringens (strain ATCC 13124 / DSM 756 / JCM 1290 / NCIMB 6125 / NCTC 8237 / Type A) protein is Putative pre-16S rRNA nuclease.